A 363-amino-acid chain; its full sequence is Histidinol-phosphate aminotransferase (363 aa).

Lys218 is modified (N6-(pyridoxal phosphate)lysine).

The protein belongs to the class-II pyridoxal-phosphate-dependent aminotransferase family. Histidinol-phosphate aminotransferase subfamily. Homodimer. Pyridoxal 5'-phosphate serves as cofactor.

It catalyses the reaction L-histidinol phosphate + 2-oxoglutarate = 3-(imidazol-4-yl)-2-oxopropyl phosphate + L-glutamate. It participates in amino-acid biosynthesis; L-histidine biosynthesis; L-histidine from 5-phospho-alpha-D-ribose 1-diphosphate: step 7/9. The chain is Histidinol-phosphate aminotransferase from Xanthomonas oryzae pv. oryzae (strain MAFF 311018).